A 694-amino-acid polypeptide reads, in one-letter code: MLHVSRLLANGGVKNLCDKFKVKIKNYTEHDLMVLNYESFERDRDHPVVVECRGLILNSRTYAVVSRSFDRFFNFQELLQNIGGEDAHHKLFQSKENFKFYEKIDGSLIKIYKYNGEWHASTRGSAFAENLCVSDVTFKRLVLQALQLDEAHNQFQALCNEYLDCASTHMFELTSKHNRIVTVYDEQPTLWYLASRNNETGDYFYCSNLPFCKYPKCYEFTSVQECVEHAAQLKNLEEGFVVYDKNNAPLCKIKSDVYLNMHKNQSRAENPTKLAQLVINGEHDDFLALFPHLKSVIKPYVDARNTFTNESTINIMVSGLTLNQQRFNELVQTLPWKCLAYRCRKAQTIDVESEFLKLTEPEKIKMIKNIIKFVSTKQALNNKLAPTIKLPSSKQLLVLIGISGSGKSTYAKSLKGYTEINRDDVRVKLFLNGDYTKLNAFYNQSRKCRQTKEEQITKMCIEQFLKAAKCGANVVVSDTNLNTQSVDMWQKMAATHNYHFLTRLMDVSLETALERNYKRSDKFPLNPETIKKQYKKFLKVNNFEYYVPVGDKFPRAVLCDLDGTVALPTNRSFYDFDNRVAQDEARLDVITCVKYLANCHDAIIVFMSGRSVICEQPTRNWIEKYFDIKSYKLFMRPSDDTCKDYLLKLKLFNNYIRGKYNVIAVFDDRPCVVRMWQDLKIPTVFNVCRDYLEF.

A ligase domain region spans residues 1–385; the sequence is MLHVSRLLAN…TKQALNNKLA (385 aa). The tract at residues 394–694 is bifunctional 5'-OH polynucleotide kinase/polynucleotide 3'-phosphatase; sequence KQLLVLIGIS…FNVCRDYLEF (301 aa). 401–408 contributes to the ATP binding site; sequence GISGSGKS.

The enzyme catalyses a 5'-end dephospho-2'-deoxyribonucleoside-DNA + ATP = a 5'-end 5'-phospho-2'-deoxyribonucleoside-DNA + ADP + H(+). It carries out the reaction ATP + (ribonucleotide)n-3'-hydroxyl + 5'-phospho-(ribonucleotide)m = (ribonucleotide)n+m + AMP + diphosphate.. Functionally, trifunctional enzyme that possesses a bifunctional polynucleotide kinase/phosphatase activity and an ATP-dependent RNA ligase activity. May therefore play a role to evade an RNA damage-based host response. This Autographa californica nuclear polyhedrosis virus (AcMNPV) protein is Putative bifunctional polynucleotide kinase/RNA ligase (PNK/PNL).